The chain runs to 372 residues: Histidinol-phosphate aminotransferase (372 aa).

K230 bears the N6-(pyridoxal phosphate)lysine mark.

It belongs to the class-II pyridoxal-phosphate-dependent aminotransferase family. Histidinol-phosphate aminotransferase subfamily. As to quaternary structure, homodimer. Requires pyridoxal 5'-phosphate as cofactor.

The enzyme catalyses L-histidinol phosphate + 2-oxoglutarate = 3-(imidazol-4-yl)-2-oxopropyl phosphate + L-glutamate. It functions in the pathway amino-acid biosynthesis; L-histidine biosynthesis; L-histidine from 5-phospho-alpha-D-ribose 1-diphosphate: step 7/9. The sequence is that of Histidinol-phosphate aminotransferase from Paenarthrobacter aurescens (strain TC1).